The following is a 243-amino-acid chain: Terpene cyclase nodB (243 aa).

Helical transmembrane passes span 19-39, 50-70, and 75-95; these read ISDI…AGMI, MAPL…LIYP, and IEQG…YTAI. Asparagine 111 carries N-linked (GlcNAc...) asparagine glycosylation. The next 4 membrane-spanning stretches (helical) occupy residues 112-132, 134-154, 169-189, and 205-225; these read ITLI…ALAA, IGPA…LSVG, SYTL…FAIL, and LVLW…ICLW.

The protein belongs to the paxB family.

It is found in the membrane. Its pathway is secondary metabolite biosynthesis. In terms of biological role, terpene cyclase; part of the gene cluster that mediates the biosynthesis of the indole diterpenes nodulisporic acids (NA). Nodulisporic acid A (NAA) and its chemically modified derivatives are of particular significance because of their highly potent insecticidal activity against blood-feeding arthropods and lack of observable adverse effects on mammals, in particular the tremogenicity associated with the paspaline-derived IDTs is not observed. The geranylgeranyl diphosphate (GGPP) synthase ggs1, localized outside of the cluster, is proposed to catalyze the first step in nodulisporic acid biosynthesis via conversion of farnesyl pyrophosphate and isopentyl pyrophosphate into geranylgeranyl pyrophosphate (GGPP). Condensation of indole-3-glycerol phosphate with GGPP by the prenyl transferase nodC then forms 3-geranylgeranylindole (3-GGI). Epoxidation by the FAD-dependent monooxygenase nodM leads to a single-epoxidized-GGI that is substrate of the terpene cyclase nodB for cyclization to yield emindole SB. The terminal methyl carbon, C28, of emindole SB is then oxidized by the cytochrome P450 monooxygenase nodW to produce nodulisporic acid F (NAF), the pentacyclic core of NAA. NAF is converted to nodulisporic acid E (NAE) via prenylation. This step is probably performed by one of the indole diterpene prenyltransferases nodD1 or nodD2. Several oxidation steps performed by the FAD-linked oxidoreductase nodO and one of the cytochrome P450 monooxygenase nodR, nodX or nodZ further convert NAE to nodulisporic acid D (NAD). NAD is substrate of cytochrome P450 monooxygenase nodJ to produce the precursor of nodulisporic acid C (NAC), converted to NAC by one of the indole diterpene prenyltransferases nodD1 or nodD2. The FAD-dependent monooxygenase nodY2 then oxidizes NAC to nodulisporic acid B (NAB). Finally NAB is converted to NAA by one of the cytochrome P450 monooxygenases nodR, nodX or nodZ. The polypeptide is Terpene cyclase nodB (Hypoxylon pulicicidum).